The chain runs to 320 residues: Probable trehalose-phosphate phosphatase C (320 aa).

Belongs to the trehalose phosphatase family. A divalent metal cation serves as cofactor.

The enzyme catalyses alpha,alpha-trehalose 6-phosphate + H2O = alpha,alpha-trehalose + phosphate. The protein operates within glycan biosynthesis; trehalose biosynthesis. Its function is as follows. Removes the phosphate from trehalose 6-phosphate to produce free trehalose. Trehalose accumulation in plant may improve abiotic stress tolerance. The protein is Probable trehalose-phosphate phosphatase C (TPPC) of Arabidopsis thaliana (Mouse-ear cress).